Here is an 864-residue protein sequence, read N- to C-terminus: Microtubule-associated protein TORTIFOLIA1 (864 aa).

The interval 1–26 (MSTPTTSGSAAKPTRPARSSSLATRS) is disordered. A compositionally biased stretch (polar residues) spans 17–26 (ARSSSLATRS). HEAT repeat units lie at residues 76–113 (ETLP…LHCD), 117–154 (AHLT…IYLK), 167–204 (LAVG…SAAS), 208–245 (TSFQ…VGAI), and 248–285 (QSLE…HSSG). The segment at 329–353 (DGASDDSKLSASEQLGSEKNGEKRS) is disordered. S414 carries the post-translational modification Phosphoserine. The interval 426 to 504 (NDEEESGLDD…QSEGSFTSNR (79 aa)) is disordered. The span at 439–448 (MGSSNRLKNT) shows a compositional bias: polar residues. The segment covering 449-459 (QADDKQVKGRF) has biased composition (basic and acidic residues). Positions 489-504 (VSNTDNQSEGSFTSNR) are enriched in polar residues. Residues 508–561 (SAIQRQLLQLERQQTNLMNMLQEFIGGSHDSMVTLEGRVRGLERIVEDMARDLS) are a coiled coil. Positions 615-670 (DDWFIPPHAASRNGQAGPRRSPRSEQYENEHMGNGRRGWDNKASGTIRFGEGPSAR) are disordered. The segment covering 636 to 654 (PRSEQYENEHMGNGRRGWD) has biased composition (basic and acidic residues).

Interacts with WAV3. In terms of tissue distribution, expressed in roots, hypocotyls, stems, flowers, siliques, inflorescences, petioles, cotyledons, and leaves. Particularly present in root tips and shoot meristems.

It localises to the cytoplasm. It is found in the cytoskeleton. Functionally, plant-specific microtubule-associated protein (MAP) that regulates the orientation of cortical microtubules and the direction of organ growth. Determines microtubule organization by modulating microtubule severing. This is Microtubule-associated protein TORTIFOLIA1 from Arabidopsis thaliana (Mouse-ear cress).